Here is a 427-residue protein sequence, read N- to C-terminus: GTPase Obg (427 aa).

Residues 1–158 (MFVDIAKIYV…LWVILELKVL (158 aa)) form the Obg domain. Positions 159–330 (ADVGLIGYPN…VLKRAYELLK (172 aa)) constitute an OBG-type G domain. Residues 165–172 (GYPNVGKS), 190–194 (FTTKY), 212–215 (DIPG), 282–285 (NKMD), and 311–313 (SAA) each bind GTP. Mg(2+) is bound by residues serine 172 and threonine 192. The OCT domain occupies 347-427 (FVYYKKKDVK…ILDVEFEYYE (81 aa)).

It belongs to the TRAFAC class OBG-HflX-like GTPase superfamily. OBG GTPase family. In terms of assembly, monomer. Requires Mg(2+) as cofactor.

The protein localises to the cytoplasm. Its function is as follows. An essential GTPase which binds GTP, GDP and possibly (p)ppGpp with moderate affinity, with high nucleotide exchange rates and a fairly low GTP hydrolysis rate. Plays a role in control of the cell cycle, stress response, ribosome biogenesis and in those bacteria that undergo differentiation, in morphogenesis control. This chain is GTPase Obg, found in Caldicellulosiruptor bescii (strain ATCC BAA-1888 / DSM 6725 / KCTC 15123 / Z-1320) (Anaerocellum thermophilum).